A 274-amino-acid polypeptide reads, in one-letter code: Uridine-5'-phosphate dioxygenase (274 aa).

Positions 103, 105, and 246 each coordinate Fe cation.

The cofactor is Fe(2+).

The enzyme catalyses UMP + 2-oxoglutarate + O2 = uridine-5'-aldehyde + succinate + phosphate + CO2. The protein operates within antibiotic biosynthesis. With respect to regulation, inhibited by several divalent cations, including Zn(2+). Its function is as follows. Dioxygenase involved in the biosynthesis of the lipopeptidyl nucleoside antibiotic A-90289. Catalyzes the dephosphorylation and oxidation of UMP to generate uridine-5'-aldehyde, the first intermediate in the biosynthesis of A-90289. This Streptomyces sp protein is Uridine-5'-phosphate dioxygenase.